Reading from the N-terminus, the 216-residue chain is Ribose-5-phosphate isomerase A (216 aa).

Substrate is bound by residues 26-29 (TGST), 79-82 (DGAD), and 92-95 (KGGG). The active-site Proton acceptor is the Glu101. Lys119 is a binding site for substrate.

It belongs to the ribose 5-phosphate isomerase family. As to quaternary structure, homodimer.

It catalyses the reaction aldehydo-D-ribose 5-phosphate = D-ribulose 5-phosphate. It functions in the pathway carbohydrate degradation; pentose phosphate pathway; D-ribose 5-phosphate from D-ribulose 5-phosphate (non-oxidative stage): step 1/1. Catalyzes the reversible conversion of ribose-5-phosphate to ribulose 5-phosphate. The sequence is that of Ribose-5-phosphate isomerase A from Legionella pneumophila (strain Corby).